Here is a 119-residue protein sequence, read N- to C-terminus: UPF0145 protein Bcep18194_B0595 (119 aa).

The protein belongs to the UPF0145 family.

In Burkholderia lata (strain ATCC 17760 / DSM 23089 / LMG 22485 / NCIMB 9086 / R18194 / 383), this protein is UPF0145 protein Bcep18194_B0595.